The following is a 397-amino-acid chain: P2X purinoceptor 3 (397 aa).

The Cytoplasmic portion of the chain corresponds to M1–S20. The chain crosses the membrane as a helical span at residues W21–F43. At L44–I322 the chain is on the extracellular side. Positions 63 and 65 each coordinate ATP. 3 cysteine pairs are disulfide-bonded: C107–C153, C116–C137, and C122–C147. E111 contacts Mg(2+). Residue N139 is glycosylated (N-linked (GlcNAc...) asparagine). D158 contacts Mg(2+). D158 is a Ca(2+) binding site. N170 carries an N-linked (GlcNAc...) asparagine glycan. Residue T172 participates in ATP binding. N194 is a glycosylation site (N-linked (GlcNAc...) asparagine). 2 disulfide bridges follow: C203-C213 and C247-C256. Residues S275, N279, and R281 each coordinate ATP. Residue N290 is glycosylated (N-linked (GlcNAc...) asparagine). K299 serves as a coordination point for ATP. The chain crosses the membrane as a helical span at residues I323–I341. At I342–H397 the chain is on the cytoplasmic side.

It belongs to the P2X receptor family. As to quaternary structure, homotrimer. Forms heterotrimer with P2RX2. Heterotrimeric P2RX2/3 has a ligand dose-response profile that is distinct from either homotrimeric P2RX2 or P2RX3.

The protein resides in the cell membrane. The catalysed reaction is Ca(2+)(in) = Ca(2+)(out). It catalyses the reaction Na(+)(in) = Na(+)(out). Has high sensitivity to ATP. Fast activation by external ATP. Exhibits rapid desensitization. Sensitives to the ATP agonist:alpha/beta-methylene-ATP. Subject to allosteric inhibition by AF-219. Mg(2+) and Ca(2+) slow deactivation of P2RX3. In terms of biological role, extracellular ATP-activated non-selective cation channel. Plays particularly important role in sensory neurons where its activation is critical for gustatory, nociceptive responses, visceral reflexes and sensory hypersensitization. The sequence is that of P2X purinoceptor 3 (P2rx3) from Mus musculus (Mouse).